We begin with the raw amino-acid sequence, 80 residues long: MKTGIKKVKLHVKKNDMVVVISGNDKGKTGKILRVFPVKGRVIVEGVNIRKRHMKPTQGNPQGSIIEREFAIHASNVKKS.

This sequence belongs to the universal ribosomal protein uL24 family. In terms of assembly, part of the 50S ribosomal subunit.

One of two assembly initiator proteins, it binds directly to the 5'-end of the 23S rRNA, where it nucleates assembly of the 50S subunit. Functionally, one of the proteins that surrounds the polypeptide exit tunnel on the outside of the subunit. The protein is Large ribosomal subunit protein uL24 of Chlorobium phaeobacteroides (strain DSM 266 / SMG 266 / 2430).